The following is a 342-amino-acid chain: Isopentenyl-diphosphate delta-isomerase (342 aa).

Residue arginine 11–lysine 12 coordinates substrate. FMN is bound by residues serine 68, serine 69 to threonine 71, serine 99, and asparagine 128. Serine 99–arginine 101 is a substrate binding site. Glutamine 162 serves as a coordination point for substrate. A Mg(2+)-binding site is contributed by glutamate 163. FMN contacts are provided by residues lysine 194, serine 219, threonine 224, glycine 275–arginine 277, and alanine 296–lysine 297.

The protein belongs to the IPP isomerase type 2 family. In terms of assembly, homooctamer. Dimer of tetramers. Requires FMN as cofactor. NADPH serves as cofactor. It depends on Mg(2+) as a cofactor.

The protein resides in the cytoplasm. It catalyses the reaction isopentenyl diphosphate = dimethylallyl diphosphate. In terms of biological role, involved in the biosynthesis of isoprenoids. Catalyzes the 1,3-allylic rearrangement of the homoallylic substrate isopentenyl (IPP) to its allylic isomer, dimethylallyl diphosphate (DMAPP). In Legionella pneumophila (strain Paris), this protein is Isopentenyl-diphosphate delta-isomerase.